The following is a 291-amino-acid chain: B3 domain-containing protein At2g16210 (291 aa).

Positions 19 to 114 (FFKVVQSINV…HFTVNIFKLD (96 aa)) form a DNA-binding region, TF-B3 1. Residues 149–159 (VSSNRGQTTAA) show a composition bias toward polar residues. The segment at 149 to 182 (VSSNRGQTTAAESKGRKLNLGKRAAKESQSSKRT) is disordered. Residues 172–182 (AAKESQSSKRT) are compositionally biased toward basic and acidic residues. The segment at residues 200–291 (AAAFTILFKQ…KELLLVVSKP (92 aa)) is a DNA-binding region (TF-B3 2).

It localises to the nucleus. This chain is B3 domain-containing protein At2g16210, found in Arabidopsis thaliana (Mouse-ear cress).